A 215-amino-acid chain; its full sequence is Inositol diphosphatase DSP1 (215 aa).

The Tyrosine-protein phosphatase domain occupies 58–209 (NFSMVDNGIF…VSSFSHIPMS (152 aa)). The segment at 114–126 (FGIEGNKEPFVNI) is WPD loop important for active site topology. Residues N125, I126, H129, and K130 each coordinate 1D-myo-inositol hexakisphosphate. The active-site Phosphocysteine intermediate is the C150.

The protein belongs to the protein-tyrosine phosphatase family. Atypical dual-specificity phosphatase Siw14-like subfamily. Homodimer and homohexamer; behaves as a monomer in solution. Highly expressed in siliques and at lower levels in roots, leaves and flowers.

The enzyme catalyses 5-diphospho-1D-myo-inositol 1,2,3,4,6-pentakisphosphate + H2O = 1D-myo-inositol hexakisphosphate + phosphate + H(+). It carries out the reaction 1,5-bis(diphospho)-1D-myo-inositol 2,3,4,6-tetrakisphosphate + H2O = 1-diphospho-1D-myo-inositol 2,3,4,5,6-pentakisphosphate + phosphate + 2 H(+). The catalysed reaction is 3,5-bis(diphospho)-1D-myo-inositol 1,2,4,6-tetrakisphosphate + H2O = 3-diphospho-1D-myo-inositol 1,2,4,5,6-pentakisphosphate + phosphate + 2 H(+). It catalyses the reaction 6-diphospho-1D-myo-inositol pentakisphosphate + H2O = 1D-myo-inositol hexakisphosphate + phosphate + H(+). The enzyme catalyses 5-diphospho-1D-myo-inositol 1,3,4,6-tetrakisphosphate + H2O = 1D-myo-inositol 1,3,4,5,6-pentakisphosphate + phosphate + H(+). Inhibited by manganese, calcium and zinc ions but not magnesium ions. Its function is as follows. Cleaves the beta-phosphate at the 5-position of soluble inositol pyrophosphates. Has highest activity on 5-diphosphoinositol 1,2,3,4,6-pentakisphosphate (5-InsP(7)), 1,5-bis-diphosphoinositol 2,3,4,6-tetrakisphosphate (1,5-InsP(8)) and 3,5-InsP(8), but has weak activity against 1-diphosphoinositol 2,3,4,5,6-pentakisphosphate (1-InsP(7)). Dephosphorylates the phosphoinositides PI(3,4,5)P3, PI(3,5)P2, but not PI(3)P, PI(3,4)P2 or PI(4,5)P2. Possesses phosphotyrosine phosphatase activity in vitro, and can hydrolyze para-nitrophenyl phosphate, O-methylfluorescein phosphate, polyphosphate and ATP. The chain is Inositol diphosphatase DSP1 from Arabidopsis thaliana (Mouse-ear cress).